The following is a 201-amino-acid chain: Large ribosomal subunit protein bL25 (201 aa).

The protein belongs to the bacterial ribosomal protein bL25 family. CTC subfamily. Part of the 50S ribosomal subunit; part of the 5S rRNA/L5/L18/L25 subcomplex. Contacts the 5S rRNA. Binds to the 5S rRNA independently of L5 and L18.

Its function is as follows. This is one of the proteins that binds to the 5S RNA in the ribosome where it forms part of the central protuberance. The polypeptide is Large ribosomal subunit protein bL25 (Burkholderia cenocepacia (strain HI2424)).